Here is a 370-residue protein sequence, read N- to C-terminus: MLRATTSAVPRALSWPAAPGNGSEREPLDDRDPLLARVELALLSTVFVAVALSNGLVLGALVRRGRRGRWAPMHVFIGHLCLADLAVALFQVLPQLAWDATYRFRGPDALCRAVKYLQMVGMYASSYMILAMTLDRHRAICRPMLAYRHGGGARWNRPVLVAWAFSLLLSLPQLFIFAQRDVGDGSGVLDCWASFAEPWGLRAYVTWIALMVFVAPALGIAACQVLIFREIHTSLVPGPAERAGGHRGGRRAGSPREGARVSAAMAKTARMTLVIVAVYVLCWAPFFLVQLWSVWDPKAPREGPPFVLLMLLASLNSCTNPWIYASFSSSISSELRSLLCCPRRRTPPSLRPQEESCATASSFSARDTSS.

The tract at residues 1-28 (MLRATTSAVPRALSWPAAPGNGSEREPL) is disordered. At 1–37 (MLRATTSAVPRALSWPAAPGNGSEREPLDDRDPLLAR) the chain is on the extracellular side. Asn-21 carries an N-linked (GlcNAc...) asparagine glycan. A helical membrane pass occupies residues 38–62 (VELALLSTVFVAVALSNGLVLGALV). At 63 to 76 (RRGRRGRWAPMHVF) the chain is on the cytoplasmic side. Residues 77–97 (IGHLCLADLAVALFQVLPQLA) form a helical membrane-spanning segment. The Extracellular segment spans residues 98–112 (WDATYRFRGPDALCR). Residues 113–134 (AVKYLQMVGMYASSYMILAMTL) traverse the membrane as a helical segment. Over 135 to 158 (DRHRAICRPMLAYRHGGGARWNRP) the chain is Cytoplasmic. The helical transmembrane segment at 159–179 (VLVAWAFSLLLSLPQLFIFAQ) threads the bilayer. Topologically, residues 180–199 (RDVGDGSGVLDCWASFAEPW) are extracellular. The chain crosses the membrane as a helical span at residues 200–219 (GLRAYVTWIALMVFVAPALG). Topologically, residues 220–270 (IAACQVLIFREIHTSLVPGPAERAGGHRGGRRAGSPREGARVSAAMAKTAR) are cytoplasmic. The chain crosses the membrane as a helical span at residues 271-292 (MTLVIVAVYVLCWAPFFLVQLW). The Extracellular portion of the chain corresponds to 293–307 (SVWDPKAPREGPPFV). The chain crosses the membrane as a helical span at residues 308–327 (LLMLLASLNSCTNPWIYASF). Topologically, residues 328–370 (SSSISSELRSLLCCPRRRTPPSLRPQEESCATASSFSARDTSS) are cytoplasmic. S-palmitoyl cysteine attachment occurs at residues Cys-340 and Cys-341. The segment at 347 to 370 (PPSLRPQEESCATASSFSARDTSS) is disordered. The span at 356 to 370 (SCATASSFSARDTSS) shows a compositional bias: polar residues.

Belongs to the G-protein coupled receptor 1 family. Vasopressin/oxytocin receptor subfamily. Interacts with ARRDC4. Identified in a complex containing at least ARRDC4, V2R and HGS. Interacts with TMEM147.

Its subcellular location is the cell membrane. Its function is as follows. Receptor for arginine vasopressin. The activity of this receptor is mediated by G proteins which activate adenylate cyclase. Involved in renal water reabsorption. This is Vasopressin V2 receptor (AVPR2) from Sus scrofa (Pig).